Consider the following 132-residue polypeptide: Small ribosomal subunit protein uS11 (132 aa).

A disordered region spans residues 1-21 (MAAPKSAVRKPRRKDKKNIAV). Positions 7–16 (AVRKPRRKDK) are enriched in basic residues.

The protein belongs to the universal ribosomal protein uS11 family. In terms of assembly, part of the 30S ribosomal subunit. Interacts with proteins S7 and S18. Binds to IF-3.

Located on the platform of the 30S subunit, it bridges several disparate RNA helices of the 16S rRNA. Forms part of the Shine-Dalgarno cleft in the 70S ribosome. In Clavibacter sepedonicus (Clavibacter michiganensis subsp. sepedonicus), this protein is Small ribosomal subunit protein uS11.